An 89-amino-acid polypeptide reads, in one-letter code: uncharacterized protein (89 aa).

Residue methionine 1 is a topological domain, cytoplasmic. A helical membrane pass occupies residues 2–22 (LFEIIYIVSSLFYIVSIIYTL). The Extracellular portion of the chain corresponds to 23 to 89 (MRIKHINTVA…ELKKSKLCEG (67 aa)).

The protein localises to the host membrane. This is an uncharacterized protein from Sulfolobus islandicus filamentous virus (isolate Iceland/Hveragerdi) (SIFV).